The sequence spans 413 residues: Probable tRNA pseudouridine synthase D (413 aa).

The active-site Nucleophile is the aspartate 97. The 204-residue stretch at 167-370 (AVPNYYGYQR…YGSYRRARLE (204 aa)) folds into the TRUD domain.

Belongs to the pseudouridine synthase TruD family.

It catalyses the reaction uridine(13) in tRNA = pseudouridine(13) in tRNA. Functionally, could be responsible for synthesis of pseudouridine from uracil-13 in transfer RNAs. This Pyrobaculum arsenaticum (strain DSM 13514 / JCM 11321 / PZ6) protein is Probable tRNA pseudouridine synthase D.